A 148-amino-acid chain; its full sequence is 3-hydroxyacyl-[acyl-carrier-protein] dehydratase FabZ (148 aa).

His-55 is an active-site residue.

The protein belongs to the thioester dehydratase family. FabZ subfamily.

The protein resides in the cytoplasm. It catalyses the reaction a (3R)-hydroxyacyl-[ACP] = a (2E)-enoyl-[ACP] + H2O. Functionally, involved in unsaturated fatty acids biosynthesis. Catalyzes the dehydration of short chain beta-hydroxyacyl-ACPs and long chain saturated and unsaturated beta-hydroxyacyl-ACPs. The polypeptide is 3-hydroxyacyl-[acyl-carrier-protein] dehydratase FabZ (Haemophilus influenzae (strain ATCC 51907 / DSM 11121 / KW20 / Rd)).